The chain runs to 272 residues: uncharacterized protein (272 aa).

The first 20 residues, M1–A20, serve as a signal peptide directing secretion. The N-palmitoyl cysteine moiety is linked to residue C21. C21 is lipidated: S-diacylglycerol cysteine.

It belongs to the MG439/MG440 family.

The protein localises to the cell membrane. This is an uncharacterized protein from Mycoplasma genitalium (strain ATCC 33530 / DSM 19775 / NCTC 10195 / G37) (Mycoplasmoides genitalium).